We begin with the raw amino-acid sequence, 182 residues long: Protein LIGHT-DEPENDENT SHORT HYPOCOTYLS 5 (182 aa).

A compositionally biased stretch (low complexity) spans 1–16 (MEGETAAKAAASSSSS). 2 disordered regions span residues 1 to 22 (MEGETAAKAAASSSSSPSRYES) and 138 to 168 (ARGIPYDKKKRKRPHTDTATPIAGDGDDAEG). Positions 19-147 (RYESQKRRDW…ARGIPYDKKK (129 aa)) constitute an ALOG domain. The short motif at 145–149 (KKKRK) is the Nuclear localization signal element.

Belongs to the plant homeotic and developmental regulators ALOG protein family.

The protein resides in the nucleus. Its function is as follows. Probable transcription regulator that acts as a developmental regulator by promoting cell growth in response to light. This chain is Protein LIGHT-DEPENDENT SHORT HYPOCOTYLS 5 (LSH5), found in Arabidopsis thaliana (Mouse-ear cress).